The chain runs to 318 residues: NADH-ubiquinone oxidoreductase chain 1 (318 aa).

The next 8 membrane-spanning stretches (helical) occupy residues Phe-2 to Leu-22, Leu-70 to Pro-90, Leu-100 to Gly-120, Val-136 to Met-156, His-171 to Ala-191, Ile-231 to Leu-251, Glu-253 to Ile-273, and Phe-293 to Gly-313.

The protein belongs to the complex I subunit 1 family. Core subunit of respiratory chain NADH dehydrogenase (Complex I) which is composed of 45 different subunits.

It is found in the mitochondrion inner membrane. The catalysed reaction is a ubiquinone + NADH + 5 H(+)(in) = a ubiquinol + NAD(+) + 4 H(+)(out). Its function is as follows. Core subunit of the mitochondrial membrane respiratory chain NADH dehydrogenase (Complex I) which catalyzes electron transfer from NADH through the respiratory chain, using ubiquinone as an electron acceptor. Essential for the catalytic activity and assembly of complex I. The protein is NADH-ubiquinone oxidoreductase chain 1 (Mtnd1) of Mus musculus (Mouse).